A 442-amino-acid polypeptide reads, in one-letter code: Signal recognition particle 54 kDa protein (442 aa).

GTP is bound by residues 106 to 113 (GLQGSGKT), 186 to 190 (DTAGR), and 244 to 247 (TKLD).

The protein belongs to the GTP-binding SRP family. SRP54 subfamily. As to quaternary structure, part of the signal recognition particle protein translocation system, which is composed of SRP and FtsY. Archaeal SRP consists of a 7S RNA molecule of 300 nucleotides and two protein subunits: SRP54 and SRP19.

Its subcellular location is the cytoplasm. The enzyme catalyses GTP + H2O = GDP + phosphate + H(+). In terms of biological role, involved in targeting and insertion of nascent membrane proteins into the cytoplasmic membrane. Binds to the hydrophobic signal sequence of the ribosome-nascent chain (RNC) as it emerges from the ribosomes. The SRP-RNC complex is then targeted to the cytoplasmic membrane where it interacts with the SRP receptor FtsY. The sequence is that of Signal recognition particle 54 kDa protein from Methanothermobacter thermautotrophicus (strain ATCC 29096 / DSM 1053 / JCM 10044 / NBRC 100330 / Delta H) (Methanobacterium thermoautotrophicum).